The primary structure comprises 186 residues: Methylamine dehydrogenase light chain (186 aa).

A signal peptide (tat-type signal) is located at residues 1-57; the sequence is MKKNTGFDSGIEKLARKTASKTGRRSFIGKLGGFLVGSALLPLLPVDRRGRMNEAHA. Intrachain disulfides connect Cys78–Cys143, Cys84–Cys116, Cys91–Cys176, Cys93–Cys141, Cys101–Cys132, and Cys133–Cys164. Position 112 is a tryptophylquinone (Trp112). The segment at residues 112-163 is a cross-link (tryptophan tryptophylquinone (Trp-Trp)); that stretch reads WVASCFNPGDGQTYLIAYRDCCGKQTCGRCNCVNVQGELPVYRPEFNNDIVW.

Belongs to the aromatic amine dehydrogenase light chain family. As to quaternary structure, heterotetramer of two light and two heavy chains. Tryptophan tryptophylquinone residue serves as cofactor. Predicted to be exported by the Tat system. The position of the signal peptide cleavage has not been experimentally proven. In terms of processing, tryptophan tryptophylquinone (TTQ) is formed by oxidation of the indole ring of a tryptophan to form tryptophylquinone followed by covalent cross-linking with another tryptophan residue.

Its subcellular location is the periplasm. It carries out the reaction 2 oxidized [amicyanin] + methylamine + H2O = 2 reduced [amicyanin] + formaldehyde + NH4(+) + 2 H(+). Its pathway is one-carbon metabolism; methylamine degradation; formaldehyde from methylamine: step 1/1. Its function is as follows. Methylamine dehydrogenase carries out the oxidation of methylamine. Electrons are passed from methylamine dehydrogenase to amicyanin. The sequence is that of Methylamine dehydrogenase light chain (mauA) from Methylobacillus flagellatus (strain ATCC 51484 / DSM 6875 / VKM B-1610 / KT).